The sequence spans 465 residues: Ubiquitin carboxyl-terminal hydrolase UCH54 (465 aa).

The UCH catalytic domain occupies 11-333 (EWCLIESNPC…VRFNIIAVMK (323 aa)). Cysteine 145 acts as the Nucleophile in catalysis. Histidine 220 serves as the catalytic Proton donor. A disordered region spans residues 244-293 (INADEQNKPNPNNNNNNKDNDNDNNNNNNNNNNNNNNNNNNNNNNNNNNI). Low complexity predominate over residues 251–292 (KPNPNNNNNNKDNDNDNNNNNNNNNNNNNNNNNNNNNNNNNN). One can recognise a ULD domain in the interval 432-460 (NFYPFIMSSLNLMAKHKLLKDAYQKEKLK).

The protein belongs to the peptidase C12 family.

It catalyses the reaction Thiol-dependent hydrolysis of ester, thioester, amide, peptide and isopeptide bonds formed by the C-terminal Gly of ubiquitin (a 76-residue protein attached to proteins as an intracellular targeting signal).. In terms of biological role, thiol protease that recognizes and hydrolyzes a peptide bond at the C-terminal glycine of either ubiquitin or NEDD8. This Plasmodium falciparum (isolate 3D7) protein is Ubiquitin carboxyl-terminal hydrolase UCH54.